Here is a 137-residue protein sequence, read N- to C-terminus: Large ribosomal subunit protein uL16 (137 aa).

Belongs to the universal ribosomal protein uL16 family. Part of the 50S ribosomal subunit.

Binds 23S rRNA and is also seen to make contacts with the A and possibly P site tRNAs. The protein is Large ribosomal subunit protein uL16 of Psychrobacter cryohalolentis (strain ATCC BAA-1226 / DSM 17306 / VKM B-2378 / K5).